A 469-amino-acid chain; its full sequence is Serine hydroxymethyltransferase, cytosolic (469 aa).

Lysine 248 carries the post-translational modification N6-(pyridoxal phosphate)lysine.

It belongs to the SHMT family. Homotetramer. The cofactor is pyridoxal 5'-phosphate.

The protein resides in the cytoplasm. The enzyme catalyses (6R)-5,10-methylene-5,6,7,8-tetrahydrofolate + glycine + H2O = (6S)-5,6,7,8-tetrahydrofolate + L-serine. It participates in one-carbon metabolism; tetrahydrofolate interconversion. In terms of biological role, interconversion of serine and glycine. This is Serine hydroxymethyltransferase, cytosolic (SHM2) from Eremothecium gossypii (strain ATCC 10895 / CBS 109.51 / FGSC 9923 / NRRL Y-1056) (Yeast).